The following is a 292-amino-acid chain: Cyclin-dependent kinase A-2 (292 aa).

The region spanning 4 to 286 (YEKVEKIGEG…ARAALEHEYF (283 aa)) is the Protein kinase domain. ATP is bound by residues 10–18 (IGEGTYGVV) and K33. T14 is subject to Phosphothreonine. Y15 bears the Phosphotyrosine mark. D126 (proton acceptor) is an active-site residue. T160 is subject to Phosphothreonine.

This sequence belongs to the protein kinase superfamily. CMGC Ser/Thr protein kinase family. CDC2/CDKX subfamily. In terms of tissue distribution, expressed in the dividing region of the root apex and in differentiated cells such as those in the sclerenchyma, pericycle and parenchyma of the central cylinder. Expressed in the intercalary meristem and the elongation zone of internodes.

It catalyses the reaction L-seryl-[protein] + ATP = O-phospho-L-seryl-[protein] + ADP + H(+). The catalysed reaction is L-threonyl-[protein] + ATP = O-phospho-L-threonyl-[protein] + ADP + H(+). It carries out the reaction [DNA-directed RNA polymerase] + ATP = phospho-[DNA-directed RNA polymerase] + ADP + H(+). This chain is Cyclin-dependent kinase A-2 (CDKA-2), found in Oryza sativa subsp. japonica (Rice).